The chain runs to 529 residues: Bifunctional purine biosynthesis protein PurH (529 aa).

Residues 1 to 148 form the MGS-like domain; that stretch reads MQQHRPVRRA…KNHKDVAIVV (148 aa).

The protein belongs to the PurH family.

It catalyses the reaction (6R)-10-formyltetrahydrofolate + 5-amino-1-(5-phospho-beta-D-ribosyl)imidazole-4-carboxamide = 5-formamido-1-(5-phospho-D-ribosyl)imidazole-4-carboxamide + (6S)-5,6,7,8-tetrahydrofolate. The catalysed reaction is IMP + H2O = 5-formamido-1-(5-phospho-D-ribosyl)imidazole-4-carboxamide. Its pathway is purine metabolism; IMP biosynthesis via de novo pathway; 5-formamido-1-(5-phospho-D-ribosyl)imidazole-4-carboxamide from 5-amino-1-(5-phospho-D-ribosyl)imidazole-4-carboxamide (10-formyl THF route): step 1/1. It functions in the pathway purine metabolism; IMP biosynthesis via de novo pathway; IMP from 5-formamido-1-(5-phospho-D-ribosyl)imidazole-4-carboxamide: step 1/1. This Erwinia tasmaniensis (strain DSM 17950 / CFBP 7177 / CIP 109463 / NCPPB 4357 / Et1/99) protein is Bifunctional purine biosynthesis protein PurH.